The following is a 337-amino-acid chain: Pyruvate dehydrogenase E1 component subunit beta (337 aa).

Residue glutamate 73 participates in thiamine diphosphate binding.

Heterodimer of an alpha and a beta chain. Requires thiamine diphosphate as cofactor.

The enzyme catalyses N(6)-[(R)-lipoyl]-L-lysyl-[protein] + pyruvate + H(+) = N(6)-[(R)-S(8)-acetyldihydrolipoyl]-L-lysyl-[protein] + CO2. Its function is as follows. The pyruvate dehydrogenase complex catalyzes the overall conversion of pyruvate to acetyl-CoA and CO(2). It contains multiple copies of three enzymatic components: pyruvate dehydrogenase (E1), dihydrolipoamide acetyltransferase (E2) and lipoamide dehydrogenase (E3). The polypeptide is Pyruvate dehydrogenase E1 component subunit beta (pdhB) (Leifsonia xyli subsp. xyli (strain CTCB07)).